The sequence spans 51 residues: Insulin (51 aa).

Disulfide bonds link C7/C37, C19/C50, and C36/C41.

This sequence belongs to the insulin family. As to quaternary structure, heterodimer of a B chain and an A chain linked by two disulfide bonds.

Its subcellular location is the secreted. In terms of biological role, insulin decreases blood glucose concentration. It increases cell permeability to monosaccharides, amino acids and fatty acids. It accelerates glycolysis, the pentose phosphate cycle, and glycogen synthesis in liver. The protein is Insulin (INS) of Saimiri sciureus (Common squirrel monkey).